Reading from the N-terminus, the 342-residue chain is UDP-3-O-acylglucosamine N-acyltransferase (342 aa).

Residue histidine 241 is the Proton acceptor of the active site.

It belongs to the transferase hexapeptide repeat family. LpxD subfamily. In terms of assembly, homotrimer.

The catalysed reaction is a UDP-3-O-[(3R)-3-hydroxyacyl]-alpha-D-glucosamine + a (3R)-hydroxyacyl-[ACP] = a UDP-2-N,3-O-bis[(3R)-3-hydroxyacyl]-alpha-D-glucosamine + holo-[ACP] + H(+). It functions in the pathway bacterial outer membrane biogenesis; LPS lipid A biosynthesis. In terms of biological role, catalyzes the N-acylation of UDP-3-O-acylglucosamine using 3-hydroxyacyl-ACP as the acyl donor. Is involved in the biosynthesis of lipid A, a phosphorylated glycolipid that anchors the lipopolysaccharide to the outer membrane of the cell. This chain is UDP-3-O-acylglucosamine N-acyltransferase, found in Pasteurella multocida (strain Pm70).